Reading from the N-terminus, the 240-residue chain is tRNA pseudouridine synthase B (240 aa).

Asp54 functions as the Nucleophile in the catalytic mechanism.

The protein belongs to the pseudouridine synthase TruB family. Type 1 subfamily.

It carries out the reaction uridine(55) in tRNA = pseudouridine(55) in tRNA. Its function is as follows. Responsible for synthesis of pseudouridine from uracil-55 in the psi GC loop of transfer RNAs. This Chlorobaculum tepidum (strain ATCC 49652 / DSM 12025 / NBRC 103806 / TLS) (Chlorobium tepidum) protein is tRNA pseudouridine synthase B.